A 124-amino-acid chain; its full sequence is Immunoglobulin lambda variable 5-52 (124 aa).

The N-terminal stretch at methionine 1–serine 19 is a signal peptide. A framework-1 region spans residues glutamine 20–serine 44. Residues proline 21–threonine 124 form the Ig-like domain. A disulfide bridge links cysteine 41 with cysteine 115. Residues serine 45 to tryptophan 53 are complementarity-determining-1. The interval isoleucine 54 to tyrosine 70 is framework-2. Positions tyrosine 71–lysine 77 are complementarity-determining-2. Residues glycine 78–cysteine 115 form a framework-3 region. Positions glycine 116 to threonine 124 are complementarity-determining-3.

In terms of assembly, immunoglobulins are composed of two identical heavy chains and two identical light chains; disulfide-linked.

It is found in the secreted. Its subcellular location is the cell membrane. V region of the variable domain of immunoglobulin light chains that participates in the antigen recognition. Immunoglobulins, also known as antibodies, are membrane-bound or secreted glycoproteins produced by B lymphocytes. In the recognition phase of humoral immunity, the membrane-bound immunoglobulins serve as receptors which, upon binding of a specific antigen, trigger the clonal expansion and differentiation of B lymphocytes into immunoglobulins-secreting plasma cells. Secreted immunoglobulins mediate the effector phase of humoral immunity, which results in the elimination of bound antigens. The antigen binding site is formed by the variable domain of one heavy chain, together with that of its associated light chain. Thus, each immunoglobulin has two antigen binding sites with remarkable affinity for a particular antigen. The variable domains are assembled by a process called V-(D)-J rearrangement and can then be subjected to somatic hypermutations which, after exposure to antigen and selection, allow affinity maturation for a particular antigen. The chain is Immunoglobulin lambda variable 5-52 from Homo sapiens (Human).